We begin with the raw amino-acid sequence, 275 residues long: NifU-like protein 5, mitochondrial (275 aa).

The N-terminal 61 residues, 1 to 61, are a transit peptide targeting the mitochondrion; it reads MKGLTRLLNS…TNASRNCSRS (61 aa).

This sequence belongs to the NifU family.

It localises to the mitochondrion. Functionally, molecular scaffold for [Fe-S] cluster assembly of mitochondrial iron-sulfur proteins. The sequence is that of NifU-like protein 5, mitochondrial (NIFU5) from Arabidopsis thaliana (Mouse-ear cress).